Reading from the N-terminus, the 963-residue chain is Phosphofurin acidic cluster sorting protein 1 (963 aa).

Positions 1–22 are enriched in gly residues; that stretch reads MAERGGAGGGPGGAGGGSGQRG. 2 disordered regions span residues 1-72 and 78-97; these read MAER…SSST and VAVA…RTPA. A2 carries the N-acetylalanine modification. Position 28 is a phosphoserine (S28). Residue T46 is modified to Phosphothreonine. The span at 53–72 shows a compositional bias: low complexity; that stretch reads ATSSSSSTSAAAASSSSSST. Residues 168-175 are involved in binding to AP-1; that stretch reads ETELQLTF. Y251 bears the Phosphotyrosine mark. The span at 262–273 shows a compositional bias: basic and acidic residues; that stretch reads GIKSKLSDRSPD. Disordered regions lie at residues 262–299 and 377–428; these read GIKS…LHGQ and NPSD…GKDT. Residues 276–293 are compositionally biased toward acidic residues; that stretch reads NYSEEEEESFSSEQEGSD. The stretch at 353–377 forms a coiled coil; the sequence is HVSREQIREVEEDLDELYDSLEMYN. S379 and S381 each carry phosphoserine. A compositionally biased stretch (polar residues) spans 406-428; sequence MSQSSSQTEIGSLNSKGSLGKDT. 2 positions are modified to phosphoserine: S430 and S495. 2 disordered regions span residues 476–542 and 760–804; these read PEKV…HSTQ and SPST…SMSS. The span at 483–496 shows a compositional bias: polar residues; that stretch reads MKSSKTDLQGSASP. The residue at position 504 (T504) is a Phosphothreonine. 5 positions are modified to phosphoserine: S519, S528, S529, S531, and S534. A compositionally biased stretch (low complexity) spans 770–804; the sequence is SPVVSLTVPSTSPPSSSGLSRDATATPPSSPSMSS.

This sequence belongs to the PACS family. Associates with AP-1 and AP-3 but not with AP-2 complexes. Interacts with FURIN. Forms a ternary complex with FURIN and AP-1. Interacts with NPHP1; the interaction is dependent of NPHP1 phosphorylation by CK2. Interacts with PKD2 (via acidic region). Interacts with SORL1. Interacts with WDR37. In terms of assembly, (Microbial infection) Interacts with HIV-1 Nef. As to quaternary structure, (Microbial infection) Interacts with Epstein-barr virus protein BBLF1.

The protein resides in the golgi apparatus. It localises to the trans-Golgi network. Coat protein that is involved in the localization of trans-Golgi network (TGN) membrane proteins that contain acidic cluster sorting motifs. Controls the endosome-to-Golgi trafficking of furin and mannose-6-phosphate receptor by connecting the acidic-cluster-containing cytoplasmic domain of these molecules with the adapter-protein complex-1 (AP-1) of endosomal clathrin-coated membrane pits. Involved in HIV-1 nef-mediated removal of MHC-I from the cell surface to the TGN. Required for normal ER Ca2+ handling in lymphocytes. Together with WDR37, it plays an essential role in lymphocyte development, quiescence and survival. Required for stabilizing peripheral lymphocyte populations. This chain is Phosphofurin acidic cluster sorting protein 1 (PACS1), found in Homo sapiens (Human).